The primary structure comprises 1603 residues: Gag-Pol polyprotein (1603 aa).

The span at 128–141 (VGETTVQRDAKMAP) shows a compositional bias: basic and acidic residues. Residues 128–150 (VGETTVQRDAKMAPEETATPKTV) are disordered. The PPXY motif motif lies at 172 to 175 (PPPY). Positions 180–184 (LYPSL) match the LYPX(n)L motif motif. The tract at residues 181-215 (YPSLAGVGEQQGQGGDTPRGAEQPRAEPGHAGLAP) is disordered. Residues 219–229 (LTDWARIREEL) carry the Nuclear export signal motif. CCHC-type zinc fingers lie at residues 507–524 (RLCY…QCPK) and 533–550 (ERCQ…QCRR). Residues 544–571 (NAKQCRRRDSNQGQRPGRGLSSGPWPVS) are disordered. Positions 609-690 (ITALLDSGAD…VRGSILGRDC (82 aa)) constitute a Peptidase A2 domain. D614 (for protease activity; shared with dimeric partner) is an active-site residue. One can recognise a Reverse transcriptase domain in the interval 750-938 (LQLGHIEPSL…PGVQYLGYKL (189 aa)). 7 residues coordinate Mg(2+): D815, D890, D891, D1158, E1192, D1213, and D1272. An RNase H type-1 domain is found at 1149–1280 (PVPGPTVFTD…ADSQATFQAY (132 aa)). The Integrase-type zinc-finger motif lies at 1280-1321 (YPLREAKDLHTTLHIGPRALSKACNISMQQAREVVQTCPHCN). The Zn(2+) site is built by H1289, H1293, C1317, and C1320. In terms of domain architecture, Integrase catalytic spans 1333–1496 (RGLGPLQIWQ…TPVQKHWRPT (164 aa)). Mg(2+) contacts are provided by D1344, D1401, and E1437. Residues 1502–1550 (PPVKIRIETGEWEKGWNVLVWGRGYAAVKNRDTDKVIWVPSRKVKPDIT) constitute a DNA-binding region (integrase-type). The segment at 1548–1567 (DITQKDEVTKKDEASPLFAG) is involved in homooctamerization. A compositionally biased stretch (basic and acidic residues) spans 1549–1561 (ITQKDEVTKKDEA). The segment at 1549–1603 (ITQKDEVTKKDEASPLFAGSSDWIPWGDEQEGLQEEAASNKQEGPGEDTLAANES) is disordered.

In terms of assembly, active as a homodimer. As to quaternary structure, homodimer. Homomultimer. Homohexamer. Homodimer; further associates as a homooctamer. In terms of assembly, heterodimer of alpha and beta subunits. Three forms of RT exist: alpha-alpha (alpha-Pol), beta-beta (beta-Pol), and alpha-beta, with the major form being the heterodimer. Both the polymerase and RNase H active sites are located in the alpha subunit of heterodimeric RT alpha-beta. Requires Mg(2+) as cofactor. Mn(2+) serves as cofactor. Post-translationally, specific enzymatic cleavages in vivo yield mature proteins. In terms of processing, capsid protein p27: The cleavage at the C-terminus is slowly trimmed by the viral protease, sometimes being cut internally thereby generating the short version of the capsid protein and a capsid protein C-terminally extended by 3 amino acids in a ratio of 2:1.

The protein localises to the virion. It catalyses the reaction DNA(n) + a 2'-deoxyribonucleoside 5'-triphosphate = DNA(n+1) + diphosphate. The catalysed reaction is Endonucleolytic cleavage to 5'-phosphomonoester.. Functionally, capsid protein p27: Self-associates to form the irregular polyhedron core composed of hexamers and pentamers, that encapsulates the genomic RNA-nucleocapsid complex. Assembles as a tube in vitro. Binds to inositol hexakisphosphate (IP6), which allows the assembly of the polyhedral capsid. In terms of biological role, plays a role in the oligomerization of the Gag polyprotein and in the stabilization of the immature particle. Essential layering element during tube assembly. Allows the cooperative binging of Gag to the host plasma membrane. Its function is as follows. Binds strongly to viral nucleic acids and promotes their packaging. Plays a role in the maturation-stabilization of the viral dimeric RNA via highly structured zinc-binding motifs. The aspartyl protease mediates proteolytic cleavages of Gag and Gag-Pol polyproteins during or shortly after the release of the virion from the plasma membrane. Cleavages take place as an ordered, step-wise cascade to yield mature proteins. This process is called maturation. Displays maximal activity during the budding process just prior to particle release from the cell. Functionally, catalyzes viral DNA integration into the host chromosome, by performing a series of DNA cutting and joining reactions. This recombination event is an essential step in the viral replication cycle. Has a strong preference for using the 3'-OH at the viral DNA end as a nucleophile. The polypeptide is Gag-Pol polyprotein (gag-pol) (Rous sarcoma virus subgroup B (strain Schmidt-Ruppin) (RSV-SR-B)).